An 804-amino-acid chain; its full sequence is Endoplasmin (804 aa).

A signal peptide spans 1–21 (MRVLWVLGLCCVLLTFGFVRA). Positions 42–44 (SRT) match the SRT pseudosubstrate motif motif. Asn-62 carries an N-linked (GlcNAc...) asparagine glycan. Ser-64 is modified (phosphoserine). Asn-107 carries N-linked (GlcNAc...) asparagine glycosylation. 3 residues coordinate ATP: Asn-107, Asp-149, and Asn-162. At Lys-168 the chain carries N6-(2-hydroxyisobutyryl)lysine. A Phosphoserine modification is found at Ser-172. An ATP-binding site is contributed by Phe-199. Asn-217 carries N-linked (GlcNAc...) asparagine glycosylation. The tract at residues 288 to 323 (TVEEPLEEDETAQEEKEEADDEAAVEEEEEEKKPKT) is disordered. Positions 289 to 317 (VEEPLEEDETAQEEKEEADDEAAVEEEEE) are enriched in acidic residues. Phosphoserine is present on Ser-403. The residue at position 404 (Lys-404) is an N6-succinyllysine. Asn-445 is a glycosylation site (N-linked (GlcNAc...) asparagine). Ser-447 carries the post-translational modification Phosphoserine. N6-acetyllysine is present on Lys-479. 2 N-linked (GlcNAc...) asparagine glycosylation sites follow: Asn-481 and Asn-502. An N6-succinyllysine modification is found at Lys-633. The disordered stretch occupies residues 749-804 (IDPEAQVEEEPEEEPEDTTEDTTDDSEQDEEETDAGAEEEEEEQETEKEPTEKDEL). The segment covering 753 to 794 (AQVEEEPEEEPEDTTEDTTDDSEQDEEETDAGAEEEEEEQET) has biased composition (acidic residues). Over residues 795-804 (EKEPTEKDEL) the composition is skewed to basic and acidic residues. Residues 801 to 804 (KDEL) carry the Prevents secretion from ER motif.

The protein belongs to the heat shock protein 90 family. In terms of assembly, homodimer; disulfide-linked. Component of an EIF2 complex at least composed of CELF1/CUGBP1, CALR, CALR3, EIF2S1, EIF2S2, HSP90B1 and HSPA5. Part of a large chaperone multiprotein complex comprising DNAJB11, HSP90B1, HSPA5, HYOU, PDIA2, PDIA4, PDIA6, PPIB, SDF2L1, UGGT1 and very small amounts of ERP29, but not, or at very low levels, CALR nor CANX. Interacts with AIMP1; regulates its retention in the endoplasmic reticulum. Hyperglycosylated form interacts with OS9; promoting its degradation by the endoplasmic reticulum associated degradation (ERAD). Interacts with CNPY3. This interaction is disrupted in the presence of ATP. Interacts with TLR4 and TLR9, but not with TLR3. Interacts with MZB1 in a calcium-dependent manner. Interacts with METTL23. Interacts with IL1B; the interaction facilitates cargo translocation into the ERGIC. Interacts with EIF2AK3. In terms of processing, phosphorylated by CK2. N-glycosylated cotranslationally at Asn-217 by STT3A-containing OST-A complex: this glycosylation is constitutive. In response to various stress, 5 additional facultative sites (Asn-62, Asn-107, Asn-445, Asn-481 and Asn-502) can be glycosylated post-translationally by STT3B-containing OST-B complex, leading to a hyperglycosylated form that is degraded by the ER-associated degradation (ERAD) pathway. In normal conditions, the OST-A complex together with CCDC134 prevent glycosylation at facultative sites during protein folding, thereby preventing hyperglycosylation. Mechanistically, nascent HSP90B1 is tethered during translation to a specialized CCDC134-containing translocon that forms a microenvironment for its folding, in which STT3A associates with the SRT pseudosubstrate motif, and prevents access to facultative glycosylation sites until folding is completed, rendering its facultative sites inaccessible to the OST-B complex.

The protein localises to the endoplasmic reticulum lumen. Its subcellular location is the sarcoplasmic reticulum lumen. The protein resides in the melanosome. The enzyme catalyses ATP + H2O = ADP + phosphate + H(+). Its function is as follows. ATP-dependent chaperone involved in the processing of proteins in the endoplasmic reticulum, regulating their transport. Together with MESD, acts as a modulator of the Wnt pathway by promoting the folding of LRP6, a coreceptor of the canonical Wnt pathway. When associated with CNPY3, required for proper folding of Toll-like receptors. Promotes folding and trafficking of TLR4 to the cell surface. May participate in the unfolding of cytosolic leaderless cargos (lacking the secretion signal sequence) such as the interleukin 1/IL-1 to facilitate their translocation into the ERGIC (endoplasmic reticulum-Golgi intermediate compartment) and secretion; the translocation process is mediated by the cargo receptor TMED10. The sequence is that of Endoplasmin from Rattus norvegicus (Rat).